The primary structure comprises 114 residues: DNA-(apurinic or apyrimidinic site) endonuclease (114 aa).

Belongs to the apurinic/apyrimidinic endonuclease family. As to quaternary structure, interacts with host Ung; this interaction allows the viral AP endonuclease to localize to newly formed AP sites and cleave them, leading to inhibition of bacterial growth.

Performs endonucleolytic cleavage at abasic sites, which are generated by the base-excision activity of host Ung. The cleavage generates a 5'-deoxyribose phosphate and 3'-hydroxyl end. The sites are specifically recognized through the formation of a complex with host Ung. The viral endonucleolytic activity damages the host DNA, blocks host DNA replication and induces cell division arrest. This may provide an advantage for the phage and save nucleotides for the viral replication since it specifically targets the host DNA, which possesses more misincorporated uracils than the viral genome. This Escherichia phage T5 (Enterobacteria phage T5) protein is DNA-(apurinic or apyrimidinic site) endonuclease.